The following is a 324-amino-acid chain: Glyoxylate/hydroxypyruvate reductase B (324 aa).

Residues Arg-237 and Glu-266 contribute to the active site. Catalysis depends on His-285, which acts as the Proton donor.

Belongs to the D-isomer specific 2-hydroxyacid dehydrogenase family. GhrB subfamily. As to quaternary structure, homodimer.

The protein localises to the cytoplasm. It catalyses the reaction glycolate + NADP(+) = glyoxylate + NADPH + H(+). It carries out the reaction (R)-glycerate + NAD(+) = 3-hydroxypyruvate + NADH + H(+). The enzyme catalyses (R)-glycerate + NADP(+) = 3-hydroxypyruvate + NADPH + H(+). In terms of biological role, catalyzes the NADPH-dependent reduction of glyoxylate and hydroxypyruvate into glycolate and glycerate, respectively. This chain is Glyoxylate/hydroxypyruvate reductase B, found in Salmonella heidelberg (strain SL476).